The sequence spans 87 residues: Cell division topological specificity factor (87 aa).

Belongs to the MinE family.

Functionally, prevents the cell division inhibition by proteins MinC and MinD at internal division sites while permitting inhibition at polar sites. This ensures cell division at the proper site by restricting the formation of a division septum at the midpoint of the long axis of the cell. In Neisseria meningitidis serogroup C (strain 053442), this protein is Cell division topological specificity factor.